We begin with the raw amino-acid sequence, 258 residues long: UPF0246 protein MS0374 (258 aa).

Belongs to the UPF0246 family.

The sequence is that of UPF0246 protein MS0374 from Mannheimia succiniciproducens (strain KCTC 0769BP / MBEL55E).